We begin with the raw amino-acid sequence, 87 residues long: U3-theraphotoxin-Hhn1a 16 (87 aa).

An N-terminal signal peptide occupies residues 1–24; it reads MVNMKASMFLTFAGLVLLFVVCYA. Positions 25-52 are excised as a propeptide; sequence SESEEKEFPKEMLSSIFAVDNDFKQGER. Intrachain disulfides connect Cys54–Cys67, Cys61–Cys72, and Cys66–Cys79.

This sequence belongs to the neurotoxin 10 (Hwtx-1) family. 51 (Hntx-8) subfamily. Hntx-8 sub-subfamily. Expressed by the venom gland.

The protein localises to the secreted. Ion channel inhibitor. The chain is U3-theraphotoxin-Hhn1a 16 from Cyriopagopus hainanus (Chinese bird spider).